The primary structure comprises 190 residues: NADH-quinone oxidoreductase subunit C (190 aa).

This sequence belongs to the complex I 30 kDa subunit family. As to quaternary structure, NDH-1 is composed of 14 different subunits. Subunits NuoB, C, D, E, F, and G constitute the peripheral sector of the complex.

It localises to the cell membrane. The catalysed reaction is a quinone + NADH + 5 H(+)(in) = a quinol + NAD(+) + 4 H(+)(out). NDH-1 shuttles electrons from NADH, via FMN and iron-sulfur (Fe-S) centers, to quinones in the respiratory chain. The immediate electron acceptor for the enzyme in this species is believed to be ubiquinone. Couples the redox reaction to proton translocation (for every two electrons transferred, four hydrogen ions are translocated across the cytoplasmic membrane), and thus conserves the redox energy in a proton gradient. This is NADH-quinone oxidoreductase subunit C from Wolbachia sp. subsp. Brugia malayi (strain TRS).